The sequence spans 239 residues: MANISSIHILFLVFITSGIAVMATDFTLRNNCPTTVWAGTLAGQGPKLGDGGFELTPGASRQLTAPAGWSGRFWARTGCNFDASGNGRCVTGDCGGLRCNGGGVPPVTLAEFTLVGDGGKDFYDVSLVDGYNVKLGIRPSGGSGDCKYAGCVSDLNAACPDMLKVMDQNNVVACKSACERFNTDQYCCRGANDKPETCPPTDYSRIFKNACPDAYSYAYDDETSTFTCTGANYEITFCP.

The N-terminal stretch at 1–23 (MANISSIHILFLVFITSGIAVMA) is a signal peptide. 8 disulfides stabilise this stretch: C32–C238, C79–C89, C94–C99, C146–C228, C151–C211, C159–C174, C178–C187, and C188–C198.

Belongs to the thaumatin family.

The protein localises to the secreted. Its subcellular location is the extracellular space. It localises to the apoplast. Its function is as follows. Partially responsible for acquired pathogen resistance. The sequence is that of Pathogenesis-related protein 5 from Arabidopsis thaliana (Mouse-ear cress).